A 178-amino-acid polypeptide reads, in one-letter code: MSRIGKAPIEIPAGVEVTVEGNLVRVKGPKGELSREIHPAMSITIENGALRVSRPSDEREHKALHGLTRTLIANMVEGVTKGYSKTLELVGTGYRAAKTGNQLTLSVGYSHPVVFNPPPGIEFQVPAPNQVIVAGIDKQLVGQVAADIRATRPPEPYLGKGIKYAGEHIRRKVGKAGK.

The protein belongs to the universal ribosomal protein uL6 family. As to quaternary structure, part of the 50S ribosomal subunit.

Its function is as follows. This protein binds to the 23S rRNA, and is important in its secondary structure. It is located near the subunit interface in the base of the L7/L12 stalk, and near the tRNA binding site of the peptidyltransferase center. This Symbiobacterium thermophilum (strain DSM 24528 / JCM 14929 / IAM 14863 / T) protein is Large ribosomal subunit protein uL6.